A 425-amino-acid polypeptide reads, in one-letter code: Diacetylchitobiose binding protein DasA (425 aa).

Residues 1–20 form the signal peptide; that stretch reads MKRKLIAAIGIAGMMVSIAA. A lipid anchor (N-palmitoyl cysteine) is attached at Cys21. Cys21 is lipidated: S-diacylglycerol cysteine.

This sequence belongs to the bacterial solute-binding protein 1 family. In terms of assembly, the complex is composed of two ATP-binding proteins (MsiK), two transmembrane proteins (DasB and DasC) and a solute-binding protein (DasA).

It is found in the cell membrane. In terms of biological role, part of the ABC transporter complex DasABC-MsiK involved in N,N'-diacetylchitobiose ((GlcNAc)2) uptake. Binds specifically to (GlcNAc)2. Can also bind to GlcNAc, (GlcNAc)3, (GlcNAc)4 and (GlcNAc)5, but it exhibits the highest affinity for (GlcNAc)2. Involved in the control of morphological differentiation. The protein is Diacetylchitobiose binding protein DasA of Streptomyces coelicolor (strain ATCC BAA-471 / A3(2) / M145).